The primary structure comprises 609 residues: Heat shock factor protein (609 aa).

The span at Met1–Asn33 shows a compositional bias: polar residues. Positions Met1–Asn47 are disordered. Residues Ser34–Ser45 show a composition bias toward low complexity. The DNA-binding element occupies Ile50–Ala156. 4 disordered regions span residues Pro255–Arg298, Ser310–Lys371, Asn411–Gln445, and Ser567–Ala609. Composition is skewed to polar residues over residues Val257–Asn277, Asp339–Pro360, Tyr422–Pro443, and Ser567–Arg597. At Ser350 the chain carries Phosphoserine. A compositionally biased stretch (basic residues) spans Gln598–Ala609.

Belongs to the HSF family. As to quaternary structure, homotrimer.

The protein localises to the nucleus. Functionally, DNA-binding protein that specifically binds heat shock promoter elements (HSE) and activates transcription. Also required for growth at normal temperatures. This Schizosaccharomyces pombe (strain 972 / ATCC 24843) (Fission yeast) protein is Heat shock factor protein (hsf1).